Reading from the N-terminus, the 957-residue chain is Glycine dehydrogenase (decarboxylating) (957 aa).

Lys-708 is subject to N6-(pyridoxal phosphate)lysine.

The protein belongs to the GcvP family. The glycine cleavage system is composed of four proteins: P, T, L and H. The cofactor is pyridoxal 5'-phosphate.

It carries out the reaction N(6)-[(R)-lipoyl]-L-lysyl-[glycine-cleavage complex H protein] + glycine + H(+) = N(6)-[(R)-S(8)-aminomethyldihydrolipoyl]-L-lysyl-[glycine-cleavage complex H protein] + CO2. The glycine cleavage system catalyzes the degradation of glycine. The P protein binds the alpha-amino group of glycine through its pyridoxal phosphate cofactor; CO(2) is released and the remaining methylamine moiety is then transferred to the lipoamide cofactor of the H protein. This is Glycine dehydrogenase (decarboxylating) from Shigella flexneri.